Reading from the N-terminus, the 425-residue chain is UPF0761 membrane protein XCV0968 (425 aa).

Transmembrane regions (helical) follow at residues 48–68 (VFALVPLAIVVFGVLSAFPAF), 105–125 (FTVAGMVALVASLLITLHSIE), 154–174 (GTMLAAASMAMAAYVFALPLF), 182–202 (LAEFAWRLAPMAVEFVCIVLI), 216–236 (ALPGALLAVILMEIVKWGFGF), and 250–270 (ALSALPILLLWIYLSWVSVLL).

Belongs to the UPF0761 family.

The protein localises to the cell inner membrane. The polypeptide is UPF0761 membrane protein XCV0968 (Xanthomonas euvesicatoria pv. vesicatoria (strain 85-10) (Xanthomonas campestris pv. vesicatoria)).